Here is a 182-residue protein sequence, read N- to C-terminus: MIYPYKGKTPQIAASAFIADYVTITGDVVIGEETSIWFNTVIRGDVAPTVIGNRVNIQDNSILHQSPNNPLIIEDGVTVGHQVILHSAIVRKNALIGMGSIILDRAEIGEGAFIGAGSLVPPGKKIPPNTLALGRPAKVVRELTEDDIREMERIRREYVEKGQYYKALQQQRTSCADKKELP.

3 residues coordinate Mg(2+): histidine 64, histidine 81, and histidine 86.

Belongs to the gamma-class carbonic anhydrase family. In terms of assembly, homotrimer. Requires Mg(2+) as cofactor. It depends on Zn(2+) as a cofactor.

The enzyme catalyses hydrogencarbonate + H(+) = CO2 + H2O. Functionally, reversible hydration of carbon dioxide. In Geobacillus kaustophilus (strain HTA426), this protein is Carbonic anhydrase.